The chain runs to 153 residues: Neuromedin-S (153 aa).

Residues Met1–Gly26 form the signal peptide. 3 propeptides span residues Phe27–Arg69, Phe70–Arg105, and Met106–Arg108. Position 141 is an asparagine amide (Asn141). Positions Asn144 to Trp153 are excised as a propeptide.

This sequence belongs to the NmU family.

It localises to the secreted. Its function is as follows. Implicated in the regulation of circadian rhythms through autocrine and/or paracrine actions. The chain is Neuromedin-S (NMS) from Homo sapiens (Human).